We begin with the raw amino-acid sequence, 133 residues long: MELEFPEDLRYLDSHEYIRLDGEIATIGISAYAIEQLGDLVFLELPEVGDSLERGSSFGSIESVKAAEDLYPPVSGTVIDRNEAMIETPEVIADDPYGDGWLLKVRVENPDDELEDTLSAHDYRAMLEGEEGI.

The region spanning isoleucine 24–arginine 106 is the Lipoyl-binding domain. Lysine 65 carries the post-translational modification N6-lipoyllysine.

This sequence belongs to the GcvH family. In terms of assembly, the glycine cleavage system is composed of four proteins: P, T, L and H. It depends on (R)-lipoate as a cofactor.

Its function is as follows. The glycine cleavage system catalyzes the degradation of glycine. The H protein shuttles the methylamine group of glycine from the P protein to the T protein. This is Glycine cleavage system H protein from Crocosphaera subtropica (strain ATCC 51142 / BH68) (Cyanothece sp. (strain ATCC 51142)).